The primary structure comprises 374 residues: METAAFETDLSLFKYDNLEQLPPSYRDLDADERTERIESALAELGDDVVILGHNYQRQEIVEHADFIGDSYQLSKEAAQSDADYVIFGGVTFMAESADIITDDDQSVILPSMEASCPMAGMAEALQVDAAWAELTAALDDEEIIPITYMNSYADLKAFCAEQGGLVCTSSNAHKAFEYAFEKGDKVLFLPDKHLGENTAHRLGMADETVEWDPWDAEGTDAADAVENDVILWEGYCQVHERFREHHIESIREDYPDANVIVHPECRREVVEAADVAGSTSTICESVAEADPGETWAIGTEIHLTHHLQRWHPDVNVVPLCGDACMDCNAMRQIDPNYLAWVLEELVEGRERNVIEVAPEEKELAQVAMDRMLEI.

Residues His53 and Ser70 each contribute to the iminosuccinate site. Cys116 serves as a coordination point for [4Fe-4S] cluster. Residues 148 to 150 and Ser169 contribute to the iminosuccinate site; that span reads YMN. Residue Cys236 participates in [4Fe-4S] cluster binding. Iminosuccinate is bound by residues 262–264 and Thr279; that span reads HPE. Cys327 provides a ligand contact to [4Fe-4S] cluster.

This sequence belongs to the quinolinate synthase family. Type 3 subfamily. [4Fe-4S] cluster serves as cofactor.

It is found in the cytoplasm. The enzyme catalyses iminosuccinate + dihydroxyacetone phosphate = quinolinate + phosphate + 2 H2O + H(+). It participates in cofactor biosynthesis; NAD(+) biosynthesis; quinolinate from iminoaspartate: step 1/1. In terms of biological role, catalyzes the condensation of iminoaspartate with dihydroxyacetone phosphate to form quinolinate. This Haloarcula marismortui (strain ATCC 43049 / DSM 3752 / JCM 8966 / VKM B-1809) (Halobacterium marismortui) protein is Quinolinate synthase.